The chain runs to 219 residues: uncharacterized protein (219 aa).

Positions 1 to 22 (MKKRRKICYCNTALLLMILLAG) are cleaved as a signal peptide. A lipid anchor (N-palmitoyl cysteine) is attached at C23. Residue C23 is the site of S-diacylglycerol cysteine attachment. The tract at residues 26–89 (SKDGEAQQPS…SAEEKSKEDN (64 aa)) is disordered. Residues 32–42 (QQPSNQASAVQ) show a composition bias toward polar residues. Residues 43 to 61 (TDEKHTEPEESTKIRKDEA) are compositionally biased toward basic and acidic residues.

It is found in the cell membrane. This is an uncharacterized protein from Bacillus subtilis (strain 168).